A 266-amino-acid chain; its full sequence is U2 small nuclear ribonucleoprotein A' (266 aa).

4 LRR repeats span residues 30-51 (ILRN…NHLA), 53-74 (PTHI…HHRD), 75-95 (DIET…ALLP), and 97-118 (KLKS…IPLS). An LRRCT domain is found at 132–170 (NPICHLSEYRQRILALVPSLEVLDFKLVSQAEKAQAVKD).

The protein belongs to the U2 small nuclear ribonucleoprotein A family. In terms of assembly, associated with the spliceosome.

It is found in the nucleus. Involved in pre-mRNA splicing. The polypeptide is U2 small nuclear ribonucleoprotein A' (LEA1) (Candida glabrata (strain ATCC 2001 / BCRC 20586 / JCM 3761 / NBRC 0622 / NRRL Y-65 / CBS 138) (Yeast)).